We begin with the raw amino-acid sequence, 372 residues long: 4-hydroxy-3-methylbut-2-en-1-yl diphosphate synthase (flavodoxin) (372 aa).

Residues C270, C273, C305, and E312 each coordinate [4Fe-4S] cluster.

This sequence belongs to the IspG family. [4Fe-4S] cluster is required as a cofactor.

It carries out the reaction (2E)-4-hydroxy-3-methylbut-2-enyl diphosphate + oxidized [flavodoxin] + H2O + 2 H(+) = 2-C-methyl-D-erythritol 2,4-cyclic diphosphate + reduced [flavodoxin]. It functions in the pathway isoprenoid biosynthesis; isopentenyl diphosphate biosynthesis via DXP pathway; isopentenyl diphosphate from 1-deoxy-D-xylulose 5-phosphate: step 5/6. Converts 2C-methyl-D-erythritol 2,4-cyclodiphosphate (ME-2,4cPP) into 1-hydroxy-2-methyl-2-(E)-butenyl 4-diphosphate. This chain is 4-hydroxy-3-methylbut-2-en-1-yl diphosphate synthase (flavodoxin), found in Salmonella arizonae (strain ATCC BAA-731 / CDC346-86 / RSK2980).